Reading from the N-terminus, the 154-residue chain is MVKAVAVVRGDSNVKGTVIFEQESESAPTTITYDISGNDPNAKRGFHIHTFGDNTNGCTSAGPHFNPHGTTHGDRTAEVRHVGDLGNIETDAQGNAKGTVTDNLVKLIGPESVIGRTVVVHAGTDDLGKGGNEESLKTGNAGPRPACGVIGISQ.

Positions 47, 49, and 64 each coordinate Cu cation. The cysteines at positions 58 and 147 are disulfide-linked. Zn(2+) is bound by residues His-64, His-72, His-81, and Asp-84. His-121 is a binding site for Cu cation. Residues 125 to 136 show a composition bias toward basic and acidic residues; it reads DDLGKGGNEESL. The disordered stretch occupies residues 125–144; the sequence is DDLGKGGNEESLKTGNAGPR. Arg-144 contributes to the substrate binding site.

It belongs to the Cu-Zn superoxide dismutase family. In terms of assembly, homodimer. Cu cation is required as a cofactor. Requires Zn(2+) as cofactor.

It localises to the cytoplasm. The enzyme catalyses 2 superoxide + 2 H(+) = H2O2 + O2. Functionally, destroys radicals which are normally produced within the cells and which are toxic to biological systems. This chain is Superoxide dismutase [Cu-Zn] (sod-1), found in Neurospora crassa (strain ATCC 24698 / 74-OR23-1A / CBS 708.71 / DSM 1257 / FGSC 987).